The sequence spans 1377 residues: DNA-directed RNA polymerase subunit beta (1377 aa).

This sequence belongs to the RNA polymerase beta chain family. The RNAP catalytic core consists of 2 alpha, 1 beta, 1 beta' and 1 omega subunit. When a sigma factor is associated with the core the holoenzyme is formed, which can initiate transcription.

It catalyses the reaction RNA(n) + a ribonucleoside 5'-triphosphate = RNA(n+1) + diphosphate. DNA-dependent RNA polymerase catalyzes the transcription of DNA into RNA using the four ribonucleoside triphosphates as substrates. This Cereibacter sphaeroides (strain ATCC 17029 / ATH 2.4.9) (Rhodobacter sphaeroides) protein is DNA-directed RNA polymerase subunit beta.